Here is a 492-residue protein sequence, read N- to C-terminus: Protein GvpD2 (492 aa).

Gly39–Thr46 is an ATP binding site. A compositionally biased stretch (basic and acidic residues) spans Arg355 to Gly368. The segment at Arg355–Leu379 is disordered.

It belongs to the gas vesicle GvpD family. In terms of assembly, homodimer. Interacts with GvpE, also with GvpE from H.mediterranei.

It is found in the cytoplasm. Functionally, causes a decrease in the amount of GvpE protein. Gas vesicles are hollow, gas filled proteinaceous nanostructures found in several microbial planktonic microorganisms. They allow positioning of halobacteria at the optimal depth for growth in the poorly aerated, shallow brine pools of their habitat. Its function is as follows. Expression of 2 c-vac DNA fragments containing 2 divergently transcribed regions (gvpE-gvpF-gvpG-gvpH-gvpI-gvpJ-gvpK-gvpL-gvpM and gvpA-gvpC-gvpN-gvpO) allows H.volcanii to produce gas vesicles. The sequence is that of Protein GvpD2 from Halobacterium salinarum (strain ATCC 700922 / JCM 11081 / NRC-1) (Halobacterium halobium).